A 504-amino-acid polypeptide reads, in one-letter code: Catalase (504 aa).

Residues His-56 and Asn-129 contribute to the active site. Tyr-339 lines the heme pocket.

It belongs to the catalase family. Homodimer. Heme serves as cofactor.

The catalysed reaction is 2 H2O2 = O2 + 2 H2O. Decomposes hydrogen peroxide into water and oxygen; serves to protect cells from the toxic effects of hydrogen peroxide. This chain is Catalase (katA), found in Staphylococcus epidermidis.